The chain runs to 141 residues: uncharacterized protein (141 aa).

This is an uncharacterized protein from Clostridium pasteurianum.